Here is a 503-residue protein sequence, read N- to C-terminus: Arabinose import ATP-binding protein AraG (503 aa).

2 ABC transporter domains span residues 5–240 (LRFD…MVGR) and 253–497 (LGDV…LPQG). ATP is bound at residue 37–44 (GENGAGKS).

Belongs to the ABC transporter superfamily. Arabinose importer (TC 3.A.1.2.2) family. In terms of assembly, the complex is composed of two ATP-binding proteins (AraG), two transmembrane proteins (AraH) and a solute-binding protein (AraF).

Its subcellular location is the cell inner membrane. It carries out the reaction L-arabinose(out) + ATP + H2O = L-arabinose(in) + ADP + phosphate + H(+). In terms of biological role, part of the ABC transporter complex AraFGH involved in arabinose import. Responsible for energy coupling to the transport system. The chain is Arabinose import ATP-binding protein AraG from Burkholderia pseudomallei (strain K96243).